We begin with the raw amino-acid sequence, 372 residues long: L-selectin (372 aa).

An N-terminal signal peptide occupies residues 1–28; it reads MIFPRKCQSTQRDLWNIFKLWGWTMLCC. Residues 29-38 constitute a propeptide that is removed on maturation; it reads DFLAHHGTDC. Residues 39 to 332 are Extracellular-facing; the sequence is WTYHYSENPM…FSMIKEGDYN (294 aa). The region spanning 55 to 155 is the C-type lectin domain; that stretch reads RFCRENYTDL…ACHKPKAALC (101 aa). 10 disulfide bridges follow: cysteine 57-cysteine 155, cysteine 128-cysteine 147, cysteine 128-cysteine 160, cysteine 160-cysteine 171, cysteine 165-cysteine 180, cysteine 182-cysteine 191, cysteine 197-cysteine 241, cysteine 227-cysteine 254, cysteine 259-cysteine 303, and cysteine 289-cysteine 316. Asparagine 60 and asparagine 104 each carry an N-linked (GlcNAc...) asparagine glycan. Ca(2+) is bound by residues glutamate 118, asparagine 120, glutamate 126, asparagine 143, and aspartate 144. The region spanning 156 to 192 is the EGF-like domain; sequence YTASCQPWSCSGHGECVEIINNYTCNCDVGYYGPQCQ. The N-linked (GlcNAc...) asparagine glycan is linked to asparagine 177. 2 consecutive Sushi domains span residues 195 to 256 and 257 to 318; these read IQCE…TCQV and IQCE…ICQK. N-linked (GlcNAc...) asparagine glycosylation is found at asparagine 226, asparagine 232, asparagine 246, and asparagine 271. Residues 333–355 form a helical membrane-spanning segment; it reads PLFIPVAVMVTAFSGLAFIIWLA. At 356–372 the chain is on the cytoplasmic side; that stretch reads RRLKKGKKSKKSMDDPY.

It belongs to the selectin/LECAM family. In terms of assembly, interaction with SELPLG/PSGL1 and PODXL2 is required for promoting recruitment and rolling of leukocytes. This interaction is dependent on the sialyl Lewis X glycan modification of SELPLG and PODXL2, and tyrosine sulfation modifications of SELPLG. Sulfation on 'Tyr-51' of SELPLG is important for L-selectin binding. N-glycosylated.

Its subcellular location is the cell membrane. Its function is as follows. Calcium-dependent lectin that mediates cell adhesion by binding to glycoproteins on neighboring cells. Mediates the adherence of lymphocytes to endothelial cells of high endothelial venules in peripheral lymph nodes. Promotes initial tethering and rolling of leukocytes in endothelia. In Macaca mulatta (Rhesus macaque), this protein is L-selectin (SELL).